A 141-amino-acid chain; its full sequence is Small ribosomal subunit protein eS17w (141 aa).

It belongs to the eukaryotic ribosomal protein eS17 family.

The chain is Small ribosomal subunit protein eS17w (RPS17D) from Arabidopsis thaliana (Mouse-ear cress).